A 927-amino-acid chain; its full sequence is Protein translocase subunit SecA (927 aa).

Residues Gln86, 104-108, and Asp494 contribute to the ATP site; that span reads GEGKT. The segment at 853 to 927 is disordered; sequence YTAPDEDGTP…GSKAKRGKRR (75 aa). The span at 860–879 shows a compositional bias: basic and acidic residues; sequence GTPHAEVEAVDPGARERTSE. The span at 907–927 shows a compositional bias: basic residues; sequence RAKRRGASARSGSKAKRGKRR.

This sequence belongs to the SecA family. As to quaternary structure, monomer and homodimer. Part of the essential Sec protein translocation apparatus which comprises SecA, SecYEG and auxiliary proteins SecDF. Other proteins may also be involved.

The protein localises to the cell membrane. It localises to the cytoplasm. It catalyses the reaction ATP + H2O + cellular proteinSide 1 = ADP + phosphate + cellular proteinSide 2.. Its function is as follows. Part of the Sec protein translocase complex. Interacts with the SecYEG preprotein conducting channel. Has a central role in coupling the hydrolysis of ATP to the transfer of proteins into and across the cell membrane, serving as an ATP-driven molecular motor driving the stepwise translocation of polypeptide chains across the membrane. The protein is Protein translocase subunit SecA of Kocuria rhizophila (strain ATCC 9341 / DSM 348 / NBRC 103217 / DC2201).